Here is an 89-residue protein sequence, read N- to C-terminus: Large ribosomal subunit protein bL27 (89 aa).

The tract at residues 1 to 21 is disordered; that stretch reads MAHKKAGGSSRNGRDSESKRL.

It belongs to the bacterial ribosomal protein bL27 family.

This Bartonella quintana (strain Toulouse) (Rochalimaea quintana) protein is Large ribosomal subunit protein bL27.